Consider the following 137-residue polypeptide: Holo-[acyl-carrier-protein] synthase (137 aa).

Mg(2+)-binding residues include Asp-8 and Glu-58.

It belongs to the P-Pant transferase superfamily. AcpS family. Requires Mg(2+) as cofactor.

The protein localises to the cytoplasm. The catalysed reaction is apo-[ACP] + CoA = holo-[ACP] + adenosine 3',5'-bisphosphate + H(+). Its function is as follows. Transfers the 4'-phosphopantetheine moiety from coenzyme A to a Ser of acyl-carrier-protein. The chain is Holo-[acyl-carrier-protein] synthase from Lactobacillus delbrueckii subsp. bulgaricus (strain ATCC BAA-365 / Lb-18).